A 258-amino-acid polypeptide reads, in one-letter code: Type III pantothenate kinase (258 aa).

Residue 6–13 (DIGNTNTV) coordinates ATP. Residues Tyr100 and 107–110 (GADR) contribute to the substrate site. Asp109 serves as the catalytic Proton acceptor. Asp129 provides a ligand contact to K(+). Residue Thr132 participates in ATP binding. Thr185 is a substrate binding site.

The protein belongs to the type III pantothenate kinase family. In terms of assembly, homodimer. The cofactor is NH4(+). Requires K(+) as cofactor.

Its subcellular location is the cytoplasm. The catalysed reaction is (R)-pantothenate + ATP = (R)-4'-phosphopantothenate + ADP + H(+). It participates in cofactor biosynthesis; coenzyme A biosynthesis; CoA from (R)-pantothenate: step 1/5. Functionally, catalyzes the phosphorylation of pantothenate (Pan), the first step in CoA biosynthesis. The protein is Type III pantothenate kinase of Syntrophobacter fumaroxidans (strain DSM 10017 / MPOB).